We begin with the raw amino-acid sequence, 121 residues long: Large ribosomal subunit protein bL12 (121 aa).

This sequence belongs to the bacterial ribosomal protein bL12 family. As to quaternary structure, homodimer. Part of the ribosomal stalk of the 50S ribosomal subunit. Forms a multimeric L10(L12)X complex, where L10 forms an elongated spine to which 2 to 4 L12 dimers bind in a sequential fashion. Binds GTP-bound translation factors.

Functionally, forms part of the ribosomal stalk which helps the ribosome interact with GTP-bound translation factors. Is thus essential for accurate translation. The polypeptide is Large ribosomal subunit protein bL12 (Psychromonas ingrahamii (strain DSM 17664 / CCUG 51855 / 37)).